A 432-amino-acid polypeptide reads, in one-letter code: Adenylosuccinate synthetase (432 aa).

GTP is bound by residues 13–19 (GDEGKGK) and 41–43 (GHT). The active-site Proton acceptor is aspartate 14. Positions 14 and 41 each coordinate Mg(2+). Residues 14 to 17 (DEGK), 39 to 42 (NAGH), threonine 130, arginine 144, glutamine 225, threonine 240, and arginine 304 contribute to the IMP site. Histidine 42 acts as the Proton donor in catalysis. 300–306 (ATTGRRR) contributes to the substrate binding site. GTP is bound by residues arginine 306, 332–334 (KLD), and 415–417 (STG).

It belongs to the adenylosuccinate synthetase family. In terms of assembly, homodimer. The cofactor is Mg(2+).

The protein resides in the cytoplasm. The enzyme catalyses IMP + L-aspartate + GTP = N(6)-(1,2-dicarboxyethyl)-AMP + GDP + phosphate + 2 H(+). It participates in purine metabolism; AMP biosynthesis via de novo pathway; AMP from IMP: step 1/2. Plays an important role in the de novo pathway of purine nucleotide biosynthesis. Catalyzes the first committed step in the biosynthesis of AMP from IMP. The sequence is that of Adenylosuccinate synthetase from Edwardsiella ictaluri (strain 93-146).